A 463-amino-acid chain; its full sequence is Cysteine--tRNA ligase (463 aa).

Cys-29 contacts Zn(2+). A 'HIGH' region motif is present at residues 31–41; that stretch reads PTVYDFAHIGN. Residues Cys-227, His-252, and Glu-256 each contribute to the Zn(2+) site. A 'KMSKS' region motif is present at residues 285–289; that stretch reads KMSKS. Lys-288 serves as a coordination point for ATP.

Belongs to the class-I aminoacyl-tRNA synthetase family. Monomer. Zn(2+) serves as cofactor.

Its subcellular location is the cytoplasm. The enzyme catalyses tRNA(Cys) + L-cysteine + ATP = L-cysteinyl-tRNA(Cys) + AMP + diphosphate. This chain is Cysteine--tRNA ligase, found in Rhodopseudomonas palustris (strain BisA53).